We begin with the raw amino-acid sequence, 709 residues long: Protein IMPAIRED IN BABA-INDUCED STERILITY 1 (709 aa).

Gly-2 carries N-myristoyl glycine lipidation. Residues 53–80 form a disordered region; the sequence is SGKKSSSKKSGSELGSDFGELSESGRAS. A Protein kinase domain is found at 131–418; that stretch reads FEKLEKIGQG…ASTALVSQYF (288 aa). Residues 137–145 and Lys-160 each bind ATP; that span reads IGQGTYSSV. Asp-255 (proton acceptor) is an active-site residue. 2 disordered regions span residues 434-536 and 566-609; these read SPSK…PFSG and SRGH…QDRE. Over residues 437-449 the composition is skewed to basic and acidic residues; sequence KEIDAKHREDTTR. Over residues 484–494 the composition is skewed to basic residues; that stretch reads HSQKFQKRNGH. Polar residues predominate over residues 495 to 505; the sequence is SVHNSIDSDST. 2 stretches are compositionally biased toward basic and acidic residues: residues 509 to 523 and 586 to 609; these read KMQK…EASH and VDSK…QDRE.

It belongs to the protein kinase superfamily. Ser/Thr protein kinase family.

Required for beta-aminobutyric acid (BABA)-induced resistance (BABA-IR) against bacteria (e.g. P.syringae) and oomycetes (e.g. H.parasitica) via priming for salicylate (SA)-dependent defense responses such as pathogenesis-related PR-1 gene expression and trailing necrosis. Involved in BABA-mediated sterility. Necessary for the inheritance of BABA-priming to next generation, especially for the primed to be primed phenotype which consists in an enhanced second BABA-priming in transgenerationally primed plants. This chain is Protein IMPAIRED IN BABA-INDUCED STERILITY 1, found in Arabidopsis thaliana (Mouse-ear cress).